A 413-amino-acid polypeptide reads, in one-letter code: Multifunctional CCA protein (413 aa).

Residues Gly-8 and Arg-11 each contribute to the ATP site. Residues Gly-8 and Arg-11 each coordinate CTP. Mg(2+)-binding residues include Asp-21 and Asp-23. Residues Arg-91, Arg-137, and Arg-140 each coordinate ATP. Residues Arg-91, Arg-137, and Arg-140 each contribute to the CTP site. Residues 228–329 (TGVHTLMTLS…VKLFDAIDAW (102 aa)) enclose the HD domain.

This sequence belongs to the tRNA nucleotidyltransferase/poly(A) polymerase family. Bacterial CCA-adding enzyme type 1 subfamily. In terms of assembly, monomer. Can also form homodimers and oligomers. The cofactor is Mg(2+). Requires Ni(2+) as cofactor.

The catalysed reaction is a tRNA precursor + 2 CTP + ATP = a tRNA with a 3' CCA end + 3 diphosphate. It carries out the reaction a tRNA with a 3' CCA end + 2 CTP + ATP = a tRNA with a 3' CCACCA end + 3 diphosphate. Catalyzes the addition and repair of the essential 3'-terminal CCA sequence in tRNAs without using a nucleic acid template. Adds these three nucleotides in the order of C, C, and A to the tRNA nucleotide-73, using CTP and ATP as substrates and producing inorganic pyrophosphate. tRNA 3'-terminal CCA addition is required both for tRNA processing and repair. Also involved in tRNA surveillance by mediating tandem CCA addition to generate a CCACCA at the 3' terminus of unstable tRNAs. While stable tRNAs receive only 3'-terminal CCA, unstable tRNAs are marked with CCACCA and rapidly degraded. The protein is Multifunctional CCA protein of Salmonella agona (strain SL483).